The following is a 243-amino-acid chain: UDP-2,3-diacylglucosamine hydrolase (243 aa).

Residues aspartate 8, histidine 10, aspartate 41, asparagine 79, and histidine 114 each coordinate Mn(2+). 79-80 (NR) contacts substrate. Substrate-binding residues include aspartate 122, lysine 164, lysine 167, and histidine 195. Positions 195 and 197 each coordinate Mn(2+).

This sequence belongs to the LpxH family. Mn(2+) is required as a cofactor.

Its subcellular location is the cell inner membrane. The enzyme catalyses UDP-2-N,3-O-bis[(3R)-3-hydroxytetradecanoyl]-alpha-D-glucosamine + H2O = 2-N,3-O-bis[(3R)-3-hydroxytetradecanoyl]-alpha-D-glucosaminyl 1-phosphate + UMP + 2 H(+). Its pathway is glycolipid biosynthesis; lipid IV(A) biosynthesis; lipid IV(A) from (3R)-3-hydroxytetradecanoyl-[acyl-carrier-protein] and UDP-N-acetyl-alpha-D-glucosamine: step 4/6. In terms of biological role, hydrolyzes the pyrophosphate bond of UDP-2,3-diacylglucosamine to yield 2,3-diacylglucosamine 1-phosphate (lipid X) and UMP by catalyzing the attack of water at the alpha-P atom. Involved in the biosynthesis of lipid A, a phosphorylated glycolipid that anchors the lipopolysaccharide to the outer membrane of the cell. The chain is UDP-2,3-diacylglucosamine hydrolase from Vibrio vulnificus (strain CMCP6).